The primary structure comprises 945 residues: Chaperone protein ClpD, chloroplastic (945 aa).

The transit peptide at 1-89 (MEVLSTSSPL…FERFTERAIR (89 aa)) directs the protein to the chloroplast. Repeat stretches follow at residues 90 to 146 (AIIF…WDEA) and 168 to 233 (FSIS…LKGE). Positions 90 to 233 (AIIFSQKEAK…AAALTRLKGE (144 aa)) constitute a Clp R domain. Residues 233-264 (EIAKDGREPSSSSKGSFESPPSGRIAGSGPGG) form a disordered region. The segment covering 241–255 (PSSSSKGSFESPPSG) has biased composition (low complexity). Residues 271-523 (LEQFCVDLTA…RARIEAFRKK (253 aa)) are i. 316 to 323 (GEAGVGKT) lines the ATP pocket. Residues 555 to 586 (SRQKQDDGDAISDESGELVEESSLPPAAGDDE) are disordered. A compositionally biased stretch (acidic residues) spans 562–574 (GDAISDESGELVE). The interval 590-781 (VGPDDIAAVA…LIIMTSNVGS (192 aa)) is II. Residue 664–671 (GPTGVGKT) coordinates ATP.

The protein belongs to the ClpA/ClpB family. ClpD subfamily. As to quaternary structure, homodimer and homohexamer. Hexamerization upon addition of ATP. Interacts with CLPT1. Stably associated with the import machinery. Mg(2+) is required as a cofactor. As to expression, expressed in stems and leaves.

It localises to the plastid. It is found in the chloroplast stroma. The catalysed reaction is ATP + H2O = ADP + phosphate + H(+). In terms of biological role, molecular chaperone that interact with a ClpP-like protease involved in degradation of denatured proteins in the chloroplast. The ATPase activity of CLPD is stimulated by CLPT1. Has no ADPase activity. Interacts with transit peptides with a positional preference. Localization of the signal sequence at the N-terminal end of a protein seems mandatory for interaction to take place. The sequence is that of Chaperone protein ClpD, chloroplastic from Arabidopsis thaliana (Mouse-ear cress).